The following is a 690-amino-acid chain: MTARRILVTSALPYANGQIHIGHLVEYIQTDIWVRFQRMMGNEVYYVGADDTHGTPVMLRAEKEGITPKQLIDRVWTEHKRDFDNFLVSFDNYYSTDAEENRQLCEKIYLALKAEDLITERDVEQFYDPVKNMFLPDRFIKGECPKCGAKDQYGDSCEVCGTTYVPTDLKNPYSVVSGATPVRKSSTHFFFKLSDPRCETFLREWVADLAQPEASNKMQEWLGAEGEASTLSDWDISRDAPYFGFEIPGAPGKYFYVWLDAPIGYYASFKNLAEKRGIDFDAWVGPHSTAEQYHFIGKDILYFHTLFWPAMLRFSGYRTPTNVFAHGFLTVDGAKMSKSRGTFITAQSYTDTGMNPEWLRYYFAAKLNASMEDLDLNLDDFVARVNSDLIGKYVNIASRAAGFLVKRFDGKVNEAALANPLLEQLRQAAPQLAQYYEGREYSKALRLVMELTDAVNAFVDTNKPWELAKDESKRDALHAACSVSLEAFRLLTIYLKPVVPTMAAGVERFLNVDPLDWRAIDKQLSADRPVQPYQHLMTRVDVKQIDALLAANRDSLQAAAPAAEAGAAGASAIEPVADTITIDDFAKIDLRVAKIVACDKVEGSNKLLQLTLDLGEGKTRNVFSGIQSAYTPEQLVGKLTVVVANLAPRKMKFGMSEGMVLAASAADEKANPGLYILEPHSGAVPGMRIR.

The 'HIGH' region signature appears at 13–23 (PYANGQIHIGH). 4 residues coordinate Zn(2+): Cys144, Cys147, Cys157, and Cys160. The short motif at 335–339 (KMSKS) is the 'KMSKS' region element. Lys338 lines the ATP pocket. The 107-residue stretch at 584–690 (DFAKIDLRVA…SGAVPGMRIR (107 aa)) folds into the tRNA-binding domain.

The protein belongs to the class-I aminoacyl-tRNA synthetase family. MetG type 1 subfamily. In terms of assembly, homodimer. It depends on Zn(2+) as a cofactor.

The protein resides in the cytoplasm. It carries out the reaction tRNA(Met) + L-methionine + ATP = L-methionyl-tRNA(Met) + AMP + diphosphate. Its function is as follows. Is required not only for elongation of protein synthesis but also for the initiation of all mRNA translation through initiator tRNA(fMet) aminoacylation. The polypeptide is Methionine--tRNA ligase (Cupriavidus metallidurans (strain ATCC 43123 / DSM 2839 / NBRC 102507 / CH34) (Ralstonia metallidurans)).